A 151-amino-acid chain; its full sequence is UPF0208 membrane protein YfbV (151 aa).

Helical transmembrane passes span 46–65 and 69–91; these read YAIRFMPPIAVFTLCWQIAL and LGPAVATALFALSLPMQGLWWLG.

The protein belongs to the UPF0208 family.

The protein resides in the cell inner membrane. The polypeptide is UPF0208 membrane protein YfbV (Shigella boydii serotype 18 (strain CDC 3083-94 / BS512)).